A 438-amino-acid chain; its full sequence is Adenylyltransferase and sulfurtransferase MOCS3 (438 aa).

Residues Gly80, Asp101, 108 to 112 (TNLHR), Lys125, and 169 to 170 (DN) contribute to the ATP site. Residues Cys210 and Cys213 each coordinate Zn(2+). Catalysis depends on Cys227, which acts as the Glycyl thioester intermediate; for adenylyltransferase activity. Positions 285 and 288 each coordinate Zn(2+). The Rhodanese domain occupies 335 to 436 (SKQRHVLVDV…WTRNVDKEFP (102 aa)). Cys392 serves as the catalytic Cysteine persulfide intermediate; for sulfurtransferase activity.

It in the N-terminal section; belongs to the HesA/MoeB/ThiF family. UBA4 subfamily. Requires Zn(2+) as cofactor.

The protein localises to the cytoplasm. The protein resides in the cytosol. The catalysed reaction is [molybdopterin-synthase sulfur-carrier protein]-C-terminal Gly-Gly + ATP + H(+) = [molybdopterin-synthase sulfur-carrier protein]-C-terminal Gly-Gly-AMP + diphosphate. The enzyme catalyses [molybdopterin-synthase sulfur-carrier protein]-C-terminal Gly-Gly-AMP + S-sulfanyl-L-cysteinyl-[cysteine desulfurase] + AH2 = [molybdopterin-synthase sulfur-carrier protein]-C-terminal-Gly-aminoethanethioate + L-cysteinyl-[cysteine desulfurase] + A + AMP + 2 H(+). Its pathway is tRNA modification; 5-methoxycarbonylmethyl-2-thiouridine-tRNA biosynthesis. It functions in the pathway cofactor biosynthesis; molybdopterin biosynthesis. Its function is as follows. Plays a central role in 2-thiolation of mcm(5)S(2)U at tRNA wobble positions of cytosolic tRNA(Lys), tRNA(Glu) and tRNA(Gln). Also essential during biosynthesis of the molybdenum cofactor. Acts by mediating the C-terminal thiocarboxylation of sulfur carriers URM1 and MOCS2A. Its N-terminus first activates URM1 and MOCS2A as acyl-adenylates (-COAMP), then the persulfide sulfur on the catalytic cysteine is transferred to URM1 and MOCS2A to form thiocarboxylation (-COSH) of their C-terminus. The reaction probably involves hydrogen sulfide that is generated from the persulfide intermediate and that acts as a nucleophile towards URM1 and MOCS2A. Subsequently, a transient disulfide bond is formed. Does not use thiosulfate as sulfur donor; NFS1 probably acting as a sulfur donor for thiocarboxylation reactions. The sequence is that of Adenylyltransferase and sulfurtransferase MOCS3 from Culex quinquefasciatus (Southern house mosquito).